We begin with the raw amino-acid sequence, 423 residues long: Glucose-1-phosphate adenylyltransferase (423 aa).

Alpha-D-glucose 1-phosphate contacts are provided by residues tyrosine 100, glycine 165, 180-181, and serine 191; that span reads EK.

The protein belongs to the bacterial/plant glucose-1-phosphate adenylyltransferase family. In terms of assembly, homotetramer.

It carries out the reaction alpha-D-glucose 1-phosphate + ATP + H(+) = ADP-alpha-D-glucose + diphosphate. The protein operates within glycan biosynthesis; glycogen biosynthesis. Involved in the biosynthesis of ADP-glucose, a building block required for the elongation reactions to produce glycogen. Catalyzes the reaction between ATP and alpha-D-glucose 1-phosphate (G1P) to produce pyrophosphate and ADP-Glc. The sequence is that of Glucose-1-phosphate adenylyltransferase from Lachnospira eligens (strain ATCC 27750 / DSM 3376 / VPI C15-48 / C15-B4) (Eubacterium eligens).